We begin with the raw amino-acid sequence, 483 residues long: Glutamyl-tRNA(Gln) amidotransferase subunit A (483 aa).

Residues Lys-76 and Ser-151 each act as charge relay system in the active site. Ser-175 acts as the Acyl-ester intermediate in catalysis.

Belongs to the amidase family. GatA subfamily. Heterotrimer of A, B and C subunits.

The catalysed reaction is L-glutamyl-tRNA(Gln) + L-glutamine + ATP + H2O = L-glutaminyl-tRNA(Gln) + L-glutamate + ADP + phosphate + H(+). Its function is as follows. Allows the formation of correctly charged Gln-tRNA(Gln) through the transamidation of misacylated Glu-tRNA(Gln) in organisms which lack glutaminyl-tRNA synthetase. The reaction takes place in the presence of glutamine and ATP through an activated gamma-phospho-Glu-tRNA(Gln). This chain is Glutamyl-tRNA(Gln) amidotransferase subunit A, found in Pseudomonas syringae pv. syringae (strain B728a).